The chain runs to 175 residues: Cuticle protein 16.5, isoform B (175 aa).

Tandem repeats lie at residues Ala17–Ala20, Ala25–Ala28, Ala31–Ala34, Ala38–Ala41, Ala44–Ala47, Ala51–Ala54, Ala57–Ala60, Ala64–Ala67, Ala70–Ala73, Ala77–Ala80, Ala83–Ala86, Ala91–Ala94, Ala99–Ala102, Ala106–Ala109, Ala134–Ala137, Ala144–Ala147, Ala151–Ala154, Ala158–Ala161, and Ala165–Ala168.

Component of the cuticle of migratory locust which contains more than 100 different structural proteins. This Locusta migratoria (Migratory locust) protein is Cuticle protein 16.5, isoform B.